Consider the following 256-residue polypeptide: UstYa family oxidase phomYc (256 aa).

Residues 38 to 58 (LVLVLQFVLIISLLASLHILG) traverse the membrane as a helical segment. N-linked (GlcNAc...) asparagine glycosylation is found at N64 and N132. Positions 158–162 (HQLHC) match the HXXHC 1 motif. N179 carries an N-linked (GlcNAc...) asparagine glycan. Residues 193–197 (HIDHC) carry the HXXHC 2 motif.

The protein belongs to the ustYa family.

Its subcellular location is the membrane. It functions in the pathway mycotoxin biosynthesis. In terms of biological role, ustYa family oxidase; part of the gene cluster that mediates the biosynthesis of the phomopsins, a group of hexapeptide mycotoxins which infects lupins and causes lupinosis disease in livestock. Within the pathway, phomYc catalyzes the desaturation of the Ile moiety into 2,3-dehydroisoleucine (dIle). The pathway starts with the processing of the precursor phomA by several endopeptidases including kexin proteases as well as the cluster-specific S41 family peptidase phomP1 and the oligopeptidase phomG to produce 10 identical copies of the hexapeptide Tyr-Val-Ile-Pro-Ile-Asp. After being excised from the precursor peptide, the core peptides are cyclized and modified post-translationally by enzymes encoded within the gene cluster. The timing and order of proteolysis of the phomA precursor and PTMs are still unknown. Two tyrosinase-like enzymes, phomQ1 and phomQ2, catalyze the chlorination and hydroxylation of Tyr, respectively. PhomYb, is proposed to be involved in the construction of the macrocyclic structure. The other 4 ustYa family proteins may be involved in PTMs that generate the unique structure of phomopsin A. PhomYa is required for the hydroxylation of C-beta of Tyr. PhomYc, phomYd, and phomYe are responsible for the biosynthesis of 2,3-dehydroisoleucine (dIle), 2,3-dehydroaspartic acid (dAsp), and 3,4-dehydroproline (dPro), respectively. While dIle formation by phomYc is indispensable for the installation of dAsp by phomYd, the order of the other PTMs have not been elucidated yet. Most of the biosynthetic enzymes likely have broad substrate specificity, and thus, there might be a metabolic grid from a precursor to phomopsin A. The enzyme(s) responsible for the biosynthesis of 3,4-dehydrovaline (dVal) have also not been identified yet. Finally, phomM acts as an S-adenosylmethionine-dependent alpha-N-methyltransferase that catalyzes two successive N-methylation reactions, converting N-desmethyl-phomopsin A to phomopsin A and phomopsin A further to an N,N-dimethylated congener called phomopsin E. This chain is UstYa family oxidase phomYc, found in Diaporthe leptostromiformis (Lupinosis disease fungus).